A 393-amino-acid polypeptide reads, in one-letter code: Lipid-A-disaccharide synthase (393 aa).

It belongs to the LpxB family.

It catalyses the reaction a lipid X + a UDP-2-N,3-O-bis[(3R)-3-hydroxyacyl]-alpha-D-glucosamine = a lipid A disaccharide + UDP + H(+). It participates in bacterial outer membrane biogenesis; LPS lipid A biosynthesis. Functionally, condensation of UDP-2,3-diacylglucosamine and 2,3-diacylglucosamine-1-phosphate to form lipid A disaccharide, a precursor of lipid A, a phosphorylated glycolipid that anchors the lipopolysaccharide to the outer membrane of the cell. The polypeptide is Lipid-A-disaccharide synthase (Actinobacillus pleuropneumoniae serotype 5b (strain L20)).